Reading from the N-terminus, the 281-residue chain is Bifunctional protein FolD (281 aa).

Residues 165–167 (GRG), Thr192, and Val233 each bind NADP(+).

It belongs to the tetrahydrofolate dehydrogenase/cyclohydrolase family. In terms of assembly, homodimer.

The catalysed reaction is (6R)-5,10-methylene-5,6,7,8-tetrahydrofolate + NADP(+) = (6R)-5,10-methenyltetrahydrofolate + NADPH. It catalyses the reaction (6R)-5,10-methenyltetrahydrofolate + H2O = (6R)-10-formyltetrahydrofolate + H(+). It participates in one-carbon metabolism; tetrahydrofolate interconversion. In terms of biological role, catalyzes the oxidation of 5,10-methylenetetrahydrofolate to 5,10-methenyltetrahydrofolate and then the hydrolysis of 5,10-methenyltetrahydrofolate to 10-formyltetrahydrofolate. This is Bifunctional protein FolD from Mycobacterium avium (strain 104).